Here is a 161-residue protein sequence, read N- to C-terminus: Protein translocase subunit SecE (161 aa).

Residues 1-12 show a composition bias toward acidic residues; that stretch reads MSDEGDVADEAV. The segment at 1–80 is disordered; sequence MSDEGDVADE…GVAKDDSTTK (80 aa). A helical transmembrane segment spans residues 133–153; sequence VVLAFLAFMVALVAGADLGLT.

It belongs to the SecE/SEC61-gamma family. As to quaternary structure, component of the Sec protein translocase complex. Heterotrimer consisting of SecY, SecE and SecG subunits. The heterotrimers can form oligomers, although 1 heterotrimer is thought to be able to translocate proteins. Interacts with the ribosome. Interacts with SecDF, and other proteins may be involved. Interacts with SecA.

It localises to the cell membrane. Functionally, essential subunit of the Sec protein translocation channel SecYEG. Clamps together the 2 halves of SecY. May contact the channel plug during translocation. This chain is Protein translocase subunit SecE, found in Mycobacterium bovis (strain ATCC BAA-935 / AF2122/97).